The following is a 257-amino-acid chain: NAD-capped RNA hydrolase NudC (257 aa).

Substrate-binding residues include lysine 25 and arginine 69. The Zn(2+) site is built by cysteine 98 and cysteine 101. Glutamate 111 provides a ligand contact to substrate. Residues cysteine 116 and cysteine 119 each coordinate Zn(2+). Residue tyrosine 124 participates in substrate binding. Residues 125–248 (PQIAPCIIVA…TVARRLIEDT (124 aa)) form the Nudix hydrolase domain. 3 residues coordinate a divalent metal cation: alanine 158, glutamate 174, and glutamate 178. Positions 159–180 (GFVEVGETLEQAVAREVMEESG) match the Nudix box motif. Residue 192 to 199 (QPWPFPQS) participates in substrate binding. Glutamate 219 contributes to the a divalent metal cation binding site. Alanine 241 lines the substrate pocket.

This sequence belongs to the Nudix hydrolase family. NudC subfamily. Homodimer. It depends on Mg(2+) as a cofactor. The cofactor is Mn(2+). Zn(2+) is required as a cofactor.

The catalysed reaction is a 5'-end NAD(+)-phospho-ribonucleoside in mRNA + H2O = a 5'-end phospho-adenosine-phospho-ribonucleoside in mRNA + beta-nicotinamide D-ribonucleotide + 2 H(+). The enzyme catalyses NAD(+) + H2O = beta-nicotinamide D-ribonucleotide + AMP + 2 H(+). It carries out the reaction NADH + H2O = reduced beta-nicotinamide D-ribonucleotide + AMP + 2 H(+). Its function is as follows. mRNA decapping enzyme that specifically removes the nicotinamide adenine dinucleotide (NAD) cap from a subset of mRNAs by hydrolyzing the diphosphate linkage to produce nicotinamide mononucleotide (NMN) and 5' monophosphate mRNA. The NAD-cap is present at the 5'-end of some mRNAs and stabilizes RNA against 5'-processing. Has preference for mRNAs with a 5'-end purine. Catalyzes the hydrolysis of a broad range of dinucleotide pyrophosphates. The chain is NAD-capped RNA hydrolase NudC from Escherichia coli O127:H6 (strain E2348/69 / EPEC).